The primary structure comprises 236 residues: 2,3,4,5-tetrahydropyridine-2,6-dicarboxylate N-acetyltransferase (236 aa).

The protein belongs to the transferase hexapeptide repeat family. DapH subfamily.

The catalysed reaction is (S)-2,3,4,5-tetrahydrodipicolinate + acetyl-CoA + H2O = L-2-acetamido-6-oxoheptanedioate + CoA. It functions in the pathway amino-acid biosynthesis; L-lysine biosynthesis via DAP pathway; LL-2,6-diaminopimelate from (S)-tetrahydrodipicolinate (acetylase route): step 1/3. Catalyzes the transfer of an acetyl group from acetyl-CoA to tetrahydrodipicolinate. In Clostridium botulinum (strain Alaska E43 / Type E3), this protein is 2,3,4,5-tetrahydropyridine-2,6-dicarboxylate N-acetyltransferase.